An 81-amino-acid chain; its full sequence is Small ribosomal subunit protein bS16 (81 aa).

Belongs to the bacterial ribosomal protein bS16 family.

This chain is Small ribosomal subunit protein bS16, found in Nautilia profundicola (strain ATCC BAA-1463 / DSM 18972 / AmH).